Reading from the N-terminus, the 520-residue chain is Ribonuclease Y (520 aa).

Residues 4-24 (VSGILLVLIGLLAGVGLGVLL) form a helical membrane-spanning segment. The 61-residue stretch at 210 to 270 (TVSVVNLPNE…VRREVARVSL (61 aa)) folds into the KH domain. The HD domain occupies 336–429 (VLQHSREVAF…VQAADALSGA (94 aa)).

This sequence belongs to the RNase Y family.

It is found in the cell membrane. Its function is as follows. Endoribonuclease that initiates mRNA decay. The protein is Ribonuclease Y of Syntrophobacter fumaroxidans (strain DSM 10017 / MPOB).